The sequence spans 277 residues: Sulfur carrier protein FdhD (277 aa).

C121 (cysteine persulfide intermediate) is an active-site residue. 260–265 contacts Mo-bis(molybdopterin guanine dinucleotide); it reads FCKPGR.

It belongs to the FdhD family.

The protein resides in the cytoplasm. Its function is as follows. Required for formate dehydrogenase (FDH) activity. Acts as a sulfur carrier protein that transfers sulfur from IscS to the molybdenum cofactor prior to its insertion into FDH. The chain is Sulfur carrier protein FdhD from Escherichia coli O81 (strain ED1a).